The following is a 131-amino-acid chain: UPF0344 protein Sca_0577 (131 aa).

Helical transmembrane passes span 1-21 (MLHL…VSYI), 42-62 (LFLV…FATA), 69-89 (LLTL…VTLV), and 99-119 (GLFW…IILP).

This sequence belongs to the UPF0344 family.

Its subcellular location is the cell membrane. The sequence is that of UPF0344 protein Sca_0577 from Staphylococcus carnosus (strain TM300).